The sequence spans 354 residues: MQRVKTKQIFVGNVAVGGDAPISVQSMTFSKTCDIEATKAQLDRLYFAGADMVRVAVSDPKDADALKDLKKVSPLPLIADIHFRYKFALIAAESVDCIRINPGNIGSKDRIKAVADACNARGIPIRIGVNGGSLEKQFEEKYGATPKGMVESALYNIKLLEDFGFSNIKISLKASDVLRTMEAYRMLRPLVDYPFHLGVTEAGTLPHSMIKSAMALGGLLMEGIGDTMRISITGELEEEIKVARLILQYSGRQKSGVSIVSCPTCGRIEANLVKMVQEVESRIKHIKIPLQVSVMGCAVNALGEAKHADIAIAFGNKDGLIIKEGKILCKLKEDQLLERFITEVEELAKQREEV.

[4Fe-4S] cluster is bound by residues Cys-262, Cys-265, Cys-297, and Glu-304.

Belongs to the IspG family. Requires [4Fe-4S] cluster as cofactor.

The catalysed reaction is (2E)-4-hydroxy-3-methylbut-2-enyl diphosphate + oxidized [flavodoxin] + H2O + 2 H(+) = 2-C-methyl-D-erythritol 2,4-cyclic diphosphate + reduced [flavodoxin]. It participates in isoprenoid biosynthesis; isopentenyl diphosphate biosynthesis via DXP pathway; isopentenyl diphosphate from 1-deoxy-D-xylulose 5-phosphate: step 5/6. Functionally, converts 2C-methyl-D-erythritol 2,4-cyclodiphosphate (ME-2,4cPP) into 1-hydroxy-2-methyl-2-(E)-butenyl 4-diphosphate. The chain is 4-hydroxy-3-methylbut-2-en-1-yl diphosphate synthase (flavodoxin) from Helicobacter hepaticus (strain ATCC 51449 / 3B1).